We begin with the raw amino-acid sequence, 804 residues long: DNA mismatch repair protein MutS (804 aa).

614 to 621 (GPNMAGKS) serves as a coordination point for ATP.

The protein belongs to the DNA mismatch repair MutS family.

Functionally, this protein is involved in the repair of mismatches in DNA. It is possible that it carries out the mismatch recognition step. This protein has a weak ATPase activity. This chain is DNA mismatch repair protein MutS, found in Ehrlichia chaffeensis (strain ATCC CRL-10679 / Arkansas).